Reading from the N-terminus, the 559-residue chain is AP-4 complex accessory subunit tepsin (559 aa).

The ENTH domain occupies 2–135; sequence LDRLAFLQQL…FSESIPSPSH (134 aa). 3 disordered regions span residues 131–157, 214–290, and 472–491; these read PSPS…APAL, AIPS…ESLD, and PNGA…SDPA. Composition is skewed to low complexity over residues 144 to 154 and 266 to 281; these read QSGMGSQASSA and SRSS…DGQS. Positions 472–485 are enriched in polar residues; that stretch reads PNGAANQKNPNGST.

It localises to the golgi apparatus. The protein resides in the trans-Golgi network membrane. The protein localises to the cytoplasmic vesicle. It is found in the cytoplasm. Its subcellular location is the cytosol. Its function is as follows. May play a role in vesicular trafficking of proteins at the trans-Golgi network. In Xenopus laevis (African clawed frog), this protein is AP-4 complex accessory subunit tepsin.